The sequence spans 306 residues: Secretory carrier-associated membrane protein 1 (306 aa).

A disordered region spans residues 1–66; that stretch reads MAGRYDSNPF…LPPEPAAFGA (66 aa). Topologically, residues 1-141 are cytoplasmic; it reads MAGRYDSNPF…EIPSHLQRMQ (141 aa). Positions 25–36 are enriched in gly residues; that stretch reads KAGGQPSYGGGA. Residues 40-55 are compositionally biased toward low complexity; sequence PNPRNVPSVSSNSRLS. Positions 72–109 form a coiled coil; that stretch reads LDSSKDLKNREKELQAREAELNKREKELKRREEAAARA. 4 helical membrane passes run 142–162, 174–194, 209–229, and 257–277; these read YVAF…VIAV, IWLL…VLWY, FGLF…SAVA, and IFYF…IWVI. Topologically, residues 278–306 are cytoplasmic; it reads QQVYMYFRGSGKAAEMKRDATRGAMRAAF.

The protein belongs to the SCAMP family.

It is found in the cell membrane. It localises to the cytoplasmic vesicle. The protein localises to the secretory vesicle membrane. Its function is as follows. Probably involved in membrane trafficking. The chain is Secretory carrier-associated membrane protein 1 (SCAMP1) from Oryza sativa subsp. japonica (Rice).